A 308-amino-acid chain; its full sequence is Cytochrome b (308 aa).

4 consecutive transmembrane segments (helical) span residues 1–21 (FGSLLGLCLITQIITGLLLAM), 45–66 (WLIRNLHANGASFFFICIYLHI), 81–101 (WNIGVILLLTLMATAFVGYVL), and 146–166 (FFAFHFLLPFVIAGLTLVHLT). Residues H51 and H65 each coordinate heme b. Heme b is bound by residues H150 and H164. H169 is a binding site for a ubiquinone. Transmembrane regions (helical) follow at residues 194 to 214 (IKDLLGFALMLIPLITLALFS), 256 to 276 (LGGVLALAASVLILFLIPLLH), and 288 to 308 (LSQILFWTLVADLLILTWVGS).

Belongs to the cytochrome b family. As to quaternary structure, the cytochrome bc1 complex contains 11 subunits: 3 respiratory subunits (MT-CYB, CYC1 and UQCRFS1), 2 core proteins (UQCRC1 and UQCRC2) and 6 low-molecular weight proteins (UQCRH/QCR6, UQCRB/QCR7, UQCRQ/QCR8, UQCR10/QCR9, UQCR11/QCR10 and a cleavage product of UQCRFS1). This cytochrome bc1 complex then forms a dimer. Heme b is required as a cofactor.

The protein localises to the mitochondrion inner membrane. In terms of biological role, component of the ubiquinol-cytochrome c reductase complex (complex III or cytochrome b-c1 complex) that is part of the mitochondrial respiratory chain. The b-c1 complex mediates electron transfer from ubiquinol to cytochrome c. Contributes to the generation of a proton gradient across the mitochondrial membrane that is then used for ATP synthesis. This Corvus corax (Common raven) protein is Cytochrome b (MT-CYB).